The sequence spans 360 residues: MGPQTGKRLLVMAGGTGGHVFPALAVARRLASEGWQIRWLGTADRMEARLVPQHGFDIDFIDIQGVRGNGLLRKLAAPFKVLRSVMQARKVIREFKPDVVLGMGGFASGPGGVAAKLCGIPLVLHEQNAIPGMTNKLLSRIATRVLCAFEGAFGSLGTTVGNPIREELVALGAKPRESRTEALKVLVVGGSLGAKVFNDLMPSVTARIAQLQPVTVWHQTGKNNLSTVQAEYQLQGQDGGVKIAEFIDDMEAAYRWADVVLCRAGALTVSELAAVGLPSILVPYPHAVDDHQTMNARVLVDAGAAFLVPQPIATTELLADKLQLLAGDRDELTRMGERARAAAVLDATERVAEVCRELAK.

Residues 16–18 (TGG), Asn-128, Arg-165, Ser-191, Ile-247, 266–271 (ALTVSE), and Gln-292 each bind UDP-N-acetyl-alpha-D-glucosamine.

This sequence belongs to the glycosyltransferase 28 family. MurG subfamily.

The protein localises to the cell inner membrane. The enzyme catalyses di-trans,octa-cis-undecaprenyl diphospho-N-acetyl-alpha-D-muramoyl-L-alanyl-D-glutamyl-meso-2,6-diaminopimeloyl-D-alanyl-D-alanine + UDP-N-acetyl-alpha-D-glucosamine = di-trans,octa-cis-undecaprenyl diphospho-[N-acetyl-alpha-D-glucosaminyl-(1-&gt;4)]-N-acetyl-alpha-D-muramoyl-L-alanyl-D-glutamyl-meso-2,6-diaminopimeloyl-D-alanyl-D-alanine + UDP + H(+). It participates in cell wall biogenesis; peptidoglycan biosynthesis. Functionally, cell wall formation. Catalyzes the transfer of a GlcNAc subunit on undecaprenyl-pyrophosphoryl-MurNAc-pentapeptide (lipid intermediate I) to form undecaprenyl-pyrophosphoryl-MurNAc-(pentapeptide)GlcNAc (lipid intermediate II). The protein is UDP-N-acetylglucosamine--N-acetylmuramyl-(pentapeptide) pyrophosphoryl-undecaprenol N-acetylglucosamine transferase of Shewanella amazonensis (strain ATCC BAA-1098 / SB2B).